A 376-amino-acid polypeptide reads, in one-letter code: Bifunctional enzyme IspD/IspF (376 aa).

Residues 1–220 (MRIAAILVAG…RSMSISMIPR (220 aa)) are 2-C-methyl-D-erythritol 4-phosphate cytidylyltransferase. Residues 220-376 (RIGTGYDVHA…QAAVIIMIPA (157 aa)) are 2-C-methyl-D-erythritol 2,4-cyclodiphosphate synthase. Aspartate 226 and histidine 228 together coordinate a divalent metal cation. Residues 226 to 228 (DVH) and 252 to 253 (HS) each bind 4-CDP-2-C-methyl-D-erythritol 2-phosphate. Histidine 260 serves as a coordination point for a divalent metal cation. 4-CDP-2-C-methyl-D-erythritol 2-phosphate contacts are provided by residues 274-276 (DIG), 350-353 (TTSE), phenylalanine 357, and arginine 360.

The protein in the N-terminal section; belongs to the IspD/TarI cytidylyltransferase family. IspD subfamily. It in the C-terminal section; belongs to the IspF family. The cofactor is a divalent metal cation.

It catalyses the reaction 2-C-methyl-D-erythritol 4-phosphate + CTP + H(+) = 4-CDP-2-C-methyl-D-erythritol + diphosphate. The catalysed reaction is 4-CDP-2-C-methyl-D-erythritol 2-phosphate = 2-C-methyl-D-erythritol 2,4-cyclic diphosphate + CMP. The protein operates within isoprenoid biosynthesis; isopentenyl diphosphate biosynthesis via DXP pathway; isopentenyl diphosphate from 1-deoxy-D-xylulose 5-phosphate: step 2/6. It participates in isoprenoid biosynthesis; isopentenyl diphosphate biosynthesis via DXP pathway; isopentenyl diphosphate from 1-deoxy-D-xylulose 5-phosphate: step 4/6. Its function is as follows. Bifunctional enzyme that catalyzes the formation of 4-diphosphocytidyl-2-C-methyl-D-erythritol from CTP and 2-C-methyl-D-erythritol 4-phosphate (MEP) (IspD), and catalyzes the conversion of 4-diphosphocytidyl-2-C-methyl-D-erythritol 2-phosphate (CDP-ME2P) to 2-C-methyl-D-erythritol 2,4-cyclodiphosphate (ME-CPP) with a corresponding release of cytidine 5-monophosphate (CMP) (IspF). In Granulibacter bethesdensis (strain ATCC BAA-1260 / CGDNIH1), this protein is Bifunctional enzyme IspD/IspF.